The sequence spans 130 residues: Small ribosomal subunit protein eS8 (130 aa).

The protein belongs to the eukaryotic ribosomal protein eS8 family. Part of the 30S ribosomal subunit.

The sequence is that of Small ribosomal subunit protein eS8 from Ignicoccus hospitalis (strain KIN4/I / DSM 18386 / JCM 14125).